Consider the following 164-residue polypeptide: Endoribonuclease YbeY (164 aa).

The Zn(2+) site is built by His114, His118, and His124.

This sequence belongs to the endoribonuclease YbeY family. Zn(2+) serves as cofactor.

It localises to the cytoplasm. In terms of biological role, single strand-specific metallo-endoribonuclease involved in late-stage 70S ribosome quality control and in maturation of the 3' terminus of the 16S rRNA. The polypeptide is Endoribonuclease YbeY (Mycoplasmoides gallisepticum (strain R(low / passage 15 / clone 2)) (Mycoplasma gallisepticum)).